A 505-amino-acid chain; its full sequence is Glutamyl-tRNA(Gln) amidotransferase subunit A (505 aa).

Residues Lys80 and Ser155 each act as charge relay system in the active site. Ser179 acts as the Acyl-ester intermediate in catalysis.

The protein belongs to the amidase family. GatA subfamily. In terms of assembly, heterotrimer of A, B and C subunits.

It catalyses the reaction L-glutamyl-tRNA(Gln) + L-glutamine + ATP + H2O = L-glutaminyl-tRNA(Gln) + L-glutamate + ADP + phosphate + H(+). Its function is as follows. Allows the formation of correctly charged Gln-tRNA(Gln) through the transamidation of misacylated Glu-tRNA(Gln) in organisms which lack glutaminyl-tRNA synthetase. The reaction takes place in the presence of glutamine and ATP through an activated gamma-phospho-Glu-tRNA(Gln). This is Glutamyl-tRNA(Gln) amidotransferase subunit A from Acidothermus cellulolyticus (strain ATCC 43068 / DSM 8971 / 11B).